Consider the following 471-residue polypeptide: Glutamate--tRNA ligase (471 aa).

A 'HIGH' region motif is present at residues 9-19 (PSPTGYLHVGG). 4 residues coordinate Zn(2+): cysteine 98, cysteine 100, cysteine 125, and histidine 127. The 'KMSKS' region signature appears at 237-241 (KLSKR). Residue lysine 240 participates in ATP binding.

Belongs to the class-I aminoacyl-tRNA synthetase family. Glutamate--tRNA ligase type 1 subfamily. As to quaternary structure, monomer. Zn(2+) serves as cofactor.

The protein localises to the cytoplasm. It carries out the reaction tRNA(Glu) + L-glutamate + ATP = L-glutamyl-tRNA(Glu) + AMP + diphosphate. Functionally, catalyzes the attachment of glutamate to tRNA(Glu) in a two-step reaction: glutamate is first activated by ATP to form Glu-AMP and then transferred to the acceptor end of tRNA(Glu). This chain is Glutamate--tRNA ligase, found in Escherichia coli (strain ATCC 8739 / DSM 1576 / NBRC 3972 / NCIMB 8545 / WDCM 00012 / Crooks).